The following is a 444-amino-acid chain: Phosphoglucosamine mutase (444 aa).

The active-site Phosphoserine intermediate is the S102. The Mg(2+) site is built by S102, D241, D243, and D245. S102 carries the post-translational modification Phosphoserine.

The protein belongs to the phosphohexose mutase family. Mg(2+) is required as a cofactor. In terms of processing, activated by phosphorylation.

The enzyme catalyses alpha-D-glucosamine 1-phosphate = D-glucosamine 6-phosphate. In terms of biological role, catalyzes the conversion of glucosamine-6-phosphate to glucosamine-1-phosphate. The chain is Phosphoglucosamine mutase from Histophilus somni (strain 129Pt) (Haemophilus somnus).